The sequence spans 952 residues: MTKETHENHLRTHNGIFPVSLLSTQARQLLNFKLKSPSYYLLNSFKLLVKSEGNNQSTTADVTLTKSPNAYHASSAREEKDLQVSRRDTCFYCSRKIIKCICNEEHVGIESVQLKLILLLCQNLPNVTTNAKKYFSSLADGHNFTLTLYKFSLDNQTFSQLLSRFKSFATLTELLQVHNVMLQVNFSFQARQLNTEIQLRRCHSLEKTWKFLFGDYELPDVLKDMESSNSDWSDTSLKRIAYLCSLVEELKLHSSIMNDKYVCLVSKHNNALEDKFNSEAARQLLQKSLSIVASNLKQAENKTISYEEKLSIAQNSINEIQTQNRDLKLETEKLQDQIKALLERNQSLQEALETVKNDEKNLREMNANYETEMKEARQKLNNKEALISHYDDDFRAKELKISRLSESLREKAGLLEFQSSVSEQRDLLYQEQIQSSIKDMENVFRKNEYLMEELNELKNNLEVESSKVLRLDEEMKCLKDEQLSQFDTVFSLTDERDGLQKDLKNTKGNLDDEIGRSAFLKSQIRDQELTIEKLHDSLETLSQTNNSLQCEISEKNAELNSVNSKLSEGRAHLETANKENEILKQQLELSESKLASLLNSYQSFINKKEHLYSFLQLVEPSFAKSDSSNATESQISESVRKGISIFNLLFIVYKNVCSQAGINPSTKLEDLDEHTLSDELTYITKKFVQKDQEYQTKEIELRNYKITLQSLLEDKLIGVNTDCRSPSCSDFEQLGQESENNTSISGRVSKLVKSFNDSSSISNNTKISITKSPSGEKVSVFKEMSDIALRDMDKNRKLLGENVDVRNIVVQKDESLNIDLQNNAVVPELHFKEGMVYDSLENAYTYLAESKRMLANELQMKQEDLEKVILELEAYKEIFLEEKQIPCEEFMPGKNAKSEKSLRSVFQEQLMRETKRVRKLEKVNSELKLHCFELSERLREREHTLQQTFGDK.

Coiled coils occupy residues glutamine 283–leucine 611, threonine 684–leucine 716, and serine 839–glutamate 942.

It localises to the cytoplasm. Has a role in meiosis. This is Meiotic coiled-coil protein 3 (mcp3) from Schizosaccharomyces pombe (strain 972 / ATCC 24843) (Fission yeast).